Reading from the N-terminus, the 153-residue chain is Small ribosomal subunit protein uS13 (153 aa).

The segment at 132–153 (VRGQRTRSHHRKGRTVGVIKKK) is disordered. Over residues 135-153 (QRTRSHHRKGRTVGVIKKK) the composition is skewed to basic residues.

Belongs to the universal ribosomal protein uS13 family. In terms of assembly, part of the 30S ribosomal subunit. Forms a loose heterodimer with protein S19. Forms two bridges to the 50S subunit in the 70S ribosome.

Located at the top of the head of the 30S subunit, it contacts several helices of the 16S rRNA. In the 70S ribosome it contacts the 23S rRNA (bridge B1a) and protein L5 of the 50S subunit (bridge B1b), connecting the 2 subunits; these bridges are implicated in subunit movement. This is Small ribosomal subunit protein uS13 from Nanoarchaeum equitans (strain Kin4-M).